The primary structure comprises 42 residues: Large ribosomal subunit protein bL36 (42 aa).

The protein belongs to the bacterial ribosomal protein bL36 family.

This is Large ribosomal subunit protein bL36 from Ehrlichia canis (strain Jake).